Consider the following 220-residue polypeptide: Ribose-5-phosphate isomerase A (220 aa).

Substrate contacts are provided by residues 28–31, 81–84, and 94–97; these read TGST, DGAD, and KGGG. Glu-103 serves as the catalytic Proton acceptor. Residue Lys-121 participates in substrate binding.

Belongs to the ribose 5-phosphate isomerase family. Homodimer.

It catalyses the reaction aldehydo-D-ribose 5-phosphate = D-ribulose 5-phosphate. The protein operates within carbohydrate degradation; pentose phosphate pathway; D-ribose 5-phosphate from D-ribulose 5-phosphate (non-oxidative stage): step 1/1. Its function is as follows. Catalyzes the reversible conversion of ribose-5-phosphate to ribulose 5-phosphate. This Shewanella sp. (strain W3-18-1) protein is Ribose-5-phosphate isomerase A.